The primary structure comprises 194 residues: Mersacidin decarboxylase (194 aa).

The active site involves histidine 75.

This sequence belongs to the HFCD (homooligomeric flavin containing Cys decarboxylase) superfamily. As to quaternary structure, homododecamer. It depends on FAD as a cofactor.

The protein operates within antibiotic biosynthesis; mersacidin biosynthesis. In terms of biological role, catalyzes the oxidative decarboxylation of the C-terminal cysteine residue of mersacidin to an aminoenethiol residue. This Bacillus sp. (strain HIL-Y85/54728) protein is Mersacidin decarboxylase (mrsD).